The primary structure comprises 600 residues: Dihydroxy-acid dehydratase (600 aa).

Aspartate 82 lines the Mg(2+) pocket. Residue cysteine 123 participates in [2Fe-2S] cluster binding. Mg(2+)-binding residues include aspartate 124 and lysine 125. Position 125 is an N6-carboxylysine (lysine 125). Residue cysteine 192 participates in [2Fe-2S] cluster binding. Glutamate 489 contributes to the Mg(2+) binding site. Serine 515 acts as the Proton acceptor in catalysis.

Belongs to the IlvD/Edd family. In terms of assembly, homodimer. [2Fe-2S] cluster is required as a cofactor. Requires Mg(2+) as cofactor.

The catalysed reaction is (2R)-2,3-dihydroxy-3-methylbutanoate = 3-methyl-2-oxobutanoate + H2O. It carries out the reaction (2R,3R)-2,3-dihydroxy-3-methylpentanoate = (S)-3-methyl-2-oxopentanoate + H2O. It participates in amino-acid biosynthesis; L-isoleucine biosynthesis; L-isoleucine from 2-oxobutanoate: step 3/4. It functions in the pathway amino-acid biosynthesis; L-valine biosynthesis; L-valine from pyruvate: step 3/4. In terms of biological role, functions in the biosynthesis of branched-chain amino acids. Catalyzes the dehydration of (2R,3R)-2,3-dihydroxy-3-methylpentanoate (2,3-dihydroxy-3-methylvalerate) into 2-oxo-3-methylpentanoate (2-oxo-3-methylvalerate) and of (2R)-2,3-dihydroxy-3-methylbutanoate (2,3-dihydroxyisovalerate) into 2-oxo-3-methylbutanoate (2-oxoisovalerate), the penultimate precursor to L-isoleucine and L-valine, respectively. In Bacteroides thetaiotaomicron (strain ATCC 29148 / DSM 2079 / JCM 5827 / CCUG 10774 / NCTC 10582 / VPI-5482 / E50), this protein is Dihydroxy-acid dehydratase.